Here is a 148-residue protein sequence, read N- to C-terminus: MPSRLRKTRKLRGHVSHGHGRIGKHRKHPGGRGNAGGLHHHRINFDKYHPGYFGKVGMKHYHLKRNQSFCPTVNLDKLWTLVSEQTRVNAAKNKTGAAPIIDVVRSGYYKVLGKGKLPKQPVIVKAKFFSRRAEEKIKSVGGACVLVG.

The span at 1-30 (MPSRLRKTRKLRGHVSHGHGRIGKHRKHPG) shows a compositional bias: basic residues. Positions 1-38 (MPSRLRKTRKLRGHVSHGHGRIGKHRKHPGGRGNAGGL) are disordered. His39 carries the post-translational modification (3S)-3-hydroxyhistidine. Residues Lys47 and Lys55 each carry the N6-acetyllysine modification. Ser68 carries the phosphoserine modification. Residue Lys110 is modified to N6-acetyllysine.

Belongs to the universal ribosomal protein uL15 family. In terms of processing, hydroxylated on His-39 by MINA.

This is Large ribosomal subunit protein uL15 (RPL27A) from Pan troglodytes (Chimpanzee).